The chain runs to 425 residues: Kynurenine/alpha-aminoadipate aminotransferase, mitochondrial (425 aa).

Residues 1 to 29 constitute a mitochondrion transit peptide; it reads MNYARFITATSAARKPSTIRVMTEILSKA. Arg20 contributes to the substrate binding site. Residue Lys69 is modified to N6-acetyllysine. Residues Tyr74 and Tyr142 each contribute to the substrate site. Residues 178–208 form a disordered region; sequence WKPEDSKNPKKNSPKFLYTVPNGNNPSGNSL. Lys179 carries the N6-acetyllysine modification. A compositionally biased stretch (polar residues) spans 198 to 208; it reads PNGNNPSGNSL. Asn202 contributes to the substrate binding site. Lys263 bears the N6-(pyridoxal phosphate)lysine; alternate mark. 2 positions are modified to N6-acetyllysine; alternate: Lys263 and Lys339. Residues Lys263 and Lys339 each carry the N6-succinyllysine; alternate modification. Arg399 provides a ligand contact to substrate. An N6-acetyllysine modification is found at Lys422.

It belongs to the class-I pyridoxal-phosphate-dependent aminotransferase family. In terms of assembly, homodimer. Pyridoxal 5'-phosphate serves as cofactor.

It is found in the mitochondrion. The catalysed reaction is L-kynurenine + 2-oxoglutarate = kynurenate + L-glutamate + H2O. It carries out the reaction L-2-aminoadipate + 2-oxoglutarate = 2-oxoadipate + L-glutamate. It catalyses the reaction glycine + 2-oxoglutarate = glyoxylate + L-glutamate. The enzyme catalyses L-kynurenine + glyoxylate = kynurenate + glycine + H2O. The catalysed reaction is 3-hydroxy-L-kynurenine + glyoxylate = xanthurenate + glycine + H2O. It carries out the reaction 2-oxohexanoate + L-kynurenine = L-2-aminohexanoate + kynurenate + H2O. It catalyses the reaction 3-phenylpyruvate + L-kynurenine = kynurenate + L-phenylalanine + H2O. The enzyme catalyses 4-methylsulfanyl-2-oxobutanoate + L-kynurenine = kynurenate + L-methionine + H2O. The catalysed reaction is 2-oxo-3-sulfanylpropanoate + L-kynurenine = kynurenate + L-cysteine + H2O. It carries out the reaction indole-3-pyruvate + L-kynurenine = kynurenate + L-tryptophan + H2O. It catalyses the reaction 2-oxopentanoate + L-kynurenine = L-2-aminopentanoate + kynurenate + H2O. The enzyme catalyses 4-methyl-2-oxopentanoate + L-kynurenine = kynurenate + L-leucine + H2O. The catalysed reaction is glyoxylate + L-methionine = 4-methylsulfanyl-2-oxobutanoate + glycine. It carries out the reaction L-2-aminoadipate + glyoxylate = 2-oxoadipate + glycine. It catalyses the reaction L-tyrosine + glyoxylate = 3-(4-hydroxyphenyl)pyruvate + glycine. The enzyme catalyses glyoxylate + L-phenylalanine = 3-phenylpyruvate + glycine. The catalysed reaction is L-tryptophan + glyoxylate = indole-3-pyruvate + glycine. It carries out the reaction L-leucine + glyoxylate = 4-methyl-2-oxopentanoate + glycine. It catalyses the reaction 2-oxobutanoate + L-kynurenine = (2S)-2-aminobutanoate + kynurenate + H2O. The enzyme catalyses 2-oxoadipate + L-kynurenine = L-2-aminoadipate + kynurenate + H2O. It functions in the pathway amino-acid degradation; L-lysine degradation via saccharopine pathway; glutaryl-CoA from L-lysine: step 4/6. Transaminase with broad substrate specificity. Has transaminase activity towards aminoadipate, kynurenine, methionine and glutamate. Shows activity also towards tryptophan, aspartate and hydroxykynurenine. Accepts a variety of oxo-acids as amino-group acceptors, with a preference for 2-oxoglutarate, 2-oxocaproic acid, phenylpyruvate and alpha-oxo-gamma-methiol butyric acid. Can also use glyoxylate as amino-group acceptor (in vitro). In Bos taurus (Bovine), this protein is Kynurenine/alpha-aminoadipate aminotransferase, mitochondrial.